Reading from the N-terminus, the 434-residue chain is 3-phosphoshikimate 1-carboxyvinyltransferase (434 aa).

3-phosphoshikimate-binding residues include Lys22, Ser23, and Arg27. Lys22 is a binding site for phosphoenolpyruvate. Positions 93 and 121 each coordinate phosphoenolpyruvate. Ser168, Ser169, Gln170, Ser199, Asp320, and Lys347 together coordinate 3-phosphoshikimate. Gln170 is a binding site for phosphoenolpyruvate. The active-site Proton acceptor is Asp320. Phosphoenolpyruvate contacts are provided by Arg351, Arg394, and Lys419.

Belongs to the EPSP synthase family. As to quaternary structure, monomer.

Its subcellular location is the cytoplasm. The catalysed reaction is 3-phosphoshikimate + phosphoenolpyruvate = 5-O-(1-carboxyvinyl)-3-phosphoshikimate + phosphate. The protein operates within metabolic intermediate biosynthesis; chorismate biosynthesis; chorismate from D-erythrose 4-phosphate and phosphoenolpyruvate: step 6/7. Catalyzes the transfer of the enolpyruvyl moiety of phosphoenolpyruvate (PEP) to the 5-hydroxyl of shikimate-3-phosphate (S3P) to produce enolpyruvyl shikimate-3-phosphate and inorganic phosphate. The polypeptide is 3-phosphoshikimate 1-carboxyvinyltransferase (Burkholderia orbicola (strain AU 1054)).